Here is a 349-residue protein sequence, read N- to C-terminus: S-adenosylmethionine:tRNA ribosyltransferase-isomerase (349 aa).

This sequence belongs to the QueA family. Monomer.

Its subcellular location is the cytoplasm. The catalysed reaction is 7-aminomethyl-7-carbaguanosine(34) in tRNA + S-adenosyl-L-methionine = epoxyqueuosine(34) in tRNA + adenine + L-methionine + 2 H(+). It functions in the pathway tRNA modification; tRNA-queuosine biosynthesis. Functionally, transfers and isomerizes the ribose moiety from AdoMet to the 7-aminomethyl group of 7-deazaguanine (preQ1-tRNA) to give epoxyqueuosine (oQ-tRNA). The protein is S-adenosylmethionine:tRNA ribosyltransferase-isomerase of Parabacteroides distasonis (strain ATCC 8503 / DSM 20701 / CIP 104284 / JCM 5825 / NCTC 11152).